A 221-amino-acid chain; its full sequence is 21 kDa seed protein (221 aa).

An N-terminal signal peptide occupies residues 1-26 (MKTATAVVLLLFAFTSKSYFFGVANA). C69 and C116 are disulfide-bonded.

Belongs to the protease inhibitor I3 (leguminous Kunitz-type inhibitor) family.

The protein is 21 kDa seed protein (ASP) of Theobroma cacao (Cacao).